Reading from the N-terminus, the 168-residue chain is Protein yop-1 (168 aa).

At 1–35 (MSSPQDRAQQYIGQLDKELSKYPTLNNLEKTTGVP) the chain is on the cytoplasmic side. The chain crosses the membrane as a helical span at residues 36 to 55 (KAYAVIGLVALYFFLIIFNL). A topological domain (lumenal) is located at residue Gly-56. Residues 57–76 (GQLLTNLAGFVLPGYYSLNA) traverse the membrane as a helical segment. Residues 77–86 (LFTASKQDDT) are Cytoplasmic-facing. Residues 87-103 (QWLTYWVVFSLFTVIES) form a helical membrane-spanning segment. Over 104-105 (LI) the chain is Lumenal. A helical transmembrane segment spans residues 106–124 (SVVYWFPFYFTFKFVFLLW). Over 125-168 (LSLPTFKGAETIFRSFLAPTLGRYFQNGSTASGLRAKADAVHTD) the chain is Cytoplasmic.

It belongs to the DP1 family. As to quaternary structure, oligomer.

It localises to the endoplasmic reticulum membrane. The protein resides in the golgi apparatus membrane. Functionally, required to generate and maintain the structure of the tubular endoplasmic reticulum network and the vacuole. Induces high curvature in membranes and causes membrane tubule formation. Involved in membrane/vesicle trafficking. The polypeptide is Protein yop-1 (yop-1) (Neurospora crassa (strain ATCC 24698 / 74-OR23-1A / CBS 708.71 / DSM 1257 / FGSC 987)).